The following is a 392-amino-acid chain: Large ribosomal subunit protein uL3 (392 aa).

Belongs to the universal ribosomal protein uL3 family.

Its subcellular location is the cytoplasm. Functionally, the L3 protein is a component of the large subunit of cytoplasmic ribosomes. The protein is Large ribosomal subunit protein uL3 (rpl3) of Aspergillus fumigatus (strain ATCC MYA-4609 / CBS 101355 / FGSC A1100 / Af293) (Neosartorya fumigata).